Reading from the N-terminus, the 968-residue chain is Protein translocase subunit SecA (968 aa).

ATP contacts are provided by residues Gln-86, 104–108 (GEGKT), and Asp-494. Residues 835–968 (PAESAEESTD…RAAKAAKKRR (134 aa)) are disordered. Low complexity-rich tracts occupy residues 883–892 (ARVATRPAAE) and 910–923 (SAPS…FSEG). Residues 956–968 (ARRRAAKAAKKRR) show a composition bias toward basic residues.

It belongs to the SecA family. As to quaternary structure, monomer and homodimer. Part of the essential Sec protein translocation apparatus which comprises SecA, SecYEG and auxiliary proteins SecDF. Other proteins may also be involved.

It localises to the cell membrane. It is found in the cytoplasm. The catalysed reaction is ATP + H2O + cellular proteinSide 1 = ADP + phosphate + cellular proteinSide 2.. Its function is as follows. Part of the Sec protein translocase complex. Interacts with the SecYEG preprotein conducting channel. Has a central role in coupling the hydrolysis of ATP to the transfer of proteins into and across the cell membrane, serving as an ATP-driven molecular motor driving the stepwise translocation of polypeptide chains across the membrane. This is Protein translocase subunit SecA from Beutenbergia cavernae (strain ATCC BAA-8 / DSM 12333 / CCUG 43141 / JCM 11478 / NBRC 16432 / NCIMB 13614 / HKI 0122).